The chain runs to 950 residues: Glycine dehydrogenase (decarboxylating) (950 aa).

The residue at position 698 (Lys-698) is an N6-(pyridoxal phosphate)lysine.

The protein belongs to the GcvP family. The glycine cleavage system is composed of four proteins: P, T, L and H. The cofactor is pyridoxal 5'-phosphate.

It catalyses the reaction N(6)-[(R)-lipoyl]-L-lysyl-[glycine-cleavage complex H protein] + glycine + H(+) = N(6)-[(R)-S(8)-aminomethyldihydrolipoyl]-L-lysyl-[glycine-cleavage complex H protein] + CO2. Functionally, the glycine cleavage system catalyzes the degradation of glycine. The P protein binds the alpha-amino group of glycine through its pyridoxal phosphate cofactor; CO(2) is released and the remaining methylamine moiety is then transferred to the lipoamide cofactor of the H protein. This Neisseria gonorrhoeae (strain NCCP11945) protein is Glycine dehydrogenase (decarboxylating).